The following is a 269-amino-acid chain: Tryptophan synthase alpha chain (269 aa).

Catalysis depends on proton acceptor residues Glu-49 and Asp-60.

Belongs to the TrpA family. As to quaternary structure, tetramer of two alpha and two beta chains.

The enzyme catalyses (1S,2R)-1-C-(indol-3-yl)glycerol 3-phosphate + L-serine = D-glyceraldehyde 3-phosphate + L-tryptophan + H2O. It functions in the pathway amino-acid biosynthesis; L-tryptophan biosynthesis; L-tryptophan from chorismate: step 5/5. Its function is as follows. The alpha subunit is responsible for the aldol cleavage of indoleglycerol phosphate to indole and glyceraldehyde 3-phosphate. This is Tryptophan synthase alpha chain from Actinobacillus pleuropneumoniae serotype 7 (strain AP76).